The following is a 664-amino-acid chain: UvrABC system protein B (664 aa).

Positions 23-180 (EGLNRGMRFQ…EKLAKIGYQR (158 aa)) constitute a Helicase ATP-binding domain. An ATP-binding site is contributed by 36–43 (GVTGSGKT). Residues 89-112 (YYDYYQPEAYIPTKDLYIEKNADI) carry the Beta-hairpin motif. Residues 426–588 (QVDDLINEIV…ITPRSIVKPL (163 aa)) enclose the Helicase C-terminal domain. The UVR domain occupies 622-657 (EEYVALLEEEMYRAASELRYEDAAALRDELFRVKET).

Belongs to the UvrB family. Forms a heterotetramer with UvrA during the search for lesions. Interacts with UvrC in an incision complex.

It localises to the cytoplasm. The UvrABC repair system catalyzes the recognition and processing of DNA lesions. A damage recognition complex composed of 2 UvrA and 2 UvrB subunits scans DNA for abnormalities. Upon binding of the UvrA(2)B(2) complex to a putative damaged site, the DNA wraps around one UvrB monomer. DNA wrap is dependent on ATP binding by UvrB and probably causes local melting of the DNA helix, facilitating insertion of UvrB beta-hairpin between the DNA strands. Then UvrB probes one DNA strand for the presence of a lesion. If a lesion is found the UvrA subunits dissociate and the UvrB-DNA preincision complex is formed. This complex is subsequently bound by UvrC and the second UvrB is released. If no lesion is found, the DNA wraps around the other UvrB subunit that will check the other stand for damage. The sequence is that of UvrABC system protein B from Thermotoga neapolitana (strain ATCC 49049 / DSM 4359 / NBRC 107923 / NS-E).